The primary structure comprises 516 residues: Putative sel1-like repeat-containing protein R850 (516 aa).

Sel1-like repeat units lie at residues 103 to 138 (ALTY…NMNS) and 230 to 265 (SISQ…KQGD).

The chain is Putative sel1-like repeat-containing protein R850 from Acanthamoeba polyphaga (Amoeba).